Reading from the N-terminus, the 284-residue chain is Nucleotide-binding protein Sputcn32_0712 (284 aa).

Gly8–Ser15 serves as a coordination point for ATP. A GTP-binding site is contributed by Asp56–Asn59.

Belongs to the RapZ-like family.

Functionally, displays ATPase and GTPase activities. The sequence is that of Nucleotide-binding protein Sputcn32_0712 from Shewanella putrefaciens (strain CN-32 / ATCC BAA-453).